Here is a 257-residue protein sequence, read N- to C-terminus: Probable pectate lyase E (257 aa).

Positions 1-17 (MYQKLLLVPLLLTSALA) are cleaved as a signal peptide.

The protein belongs to the polysaccharide lyase 3 family. Ca(2+) is required as a cofactor.

It is found in the secreted. It carries out the reaction Eliminative cleavage of (1-&gt;4)-alpha-D-galacturonan to give oligosaccharides with 4-deoxy-alpha-D-galact-4-enuronosyl groups at their non-reducing ends.. In terms of biological role, pectinolytic enzyme consist of four classes of enzymes: pectin lyase, polygalacturonase, pectin methylesterase and rhamnogalacturonase. Among pectinolytic enzymes, pectin lyase is the most important in depolymerization of pectin, since it cleaves internal glycosidic bonds of highly methylated pectins. Favors pectate, the anion, over pectin, the methyl ester. The polypeptide is Probable pectate lyase E (plyE) (Aspergillus flavus (strain ATCC 200026 / FGSC A1120 / IAM 13836 / NRRL 3357 / JCM 12722 / SRRC 167)).